We begin with the raw amino-acid sequence, 607 residues long: Dolichyl-diphosphooligosaccharide--protein glycosyltransferase subunit 1 (607 aa).

The first 23 residues, 1-23 (MEAPAAGLFLLLLLGTWAPAPGS), serve as a signal peptide directing secretion. Topologically, residues 24-438 (ASSEAPPLIN…TFNKVLMLQE (415 aa)) are lumenal. An N6-acetyllysine modification is found at lysine 187. Asparagine 299 carries an N-linked (GlcNAc...) asparagine glycan. The chain crosses the membrane as a helical span at residues 439 to 457 (PLLVVAAFYILFFTVIIYV). Residues 458-607 (RLDFSITKDP…TKIDHILDAL (150 aa)) are Cytoplasmic-facing. Lysine 538 is modified (N6-acetyllysine; alternate). Lysine 538 participates in a covalent cross-link: Glycyl lysine isopeptide (Lys-Gly) (interchain with G-Cter in SUMO2); alternate.

It belongs to the OST1 family. In terms of assembly, component of the oligosaccharyltransferase (OST) complex. OST exists in two different complex forms which contain common core subunits RPN1, RPN2, OST48, OST4, DAD1 and TMEM258, either STT3A or STT3B as catalytic subunits, and form-specific accessory subunits. STT3A complex assembly occurs through the formation of 3 subcomplexes. Subcomplex 1 contains RPN1 and TMEM258, subcomplex 2 contains the STT3A-specific subunits STT3A, DC2/OSTC, and KCP2 as well as the core subunit OST4, and subcomplex 3 contains RPN2, DAD1, and OST48. The STT3A complex can form stable complexes with the Sec61 complex or with both the Sec61 and TRAP complexes. Interacts with TMEM35A/NACHO. Ubiquitinated by the ECS(ASB11) complex. Ubiquitinated by RNF128, leading to degradation in a proteasome/lysosome-dependent manner. Post-translationally, ufmylated by UFL1 in response to endoplasmic reticulum stress, promoting reticulophagy of endoplasmic reticulum sheets. Expressed in all tissues tested.

It is found in the endoplasmic reticulum membrane. Its subcellular location is the melanosome. Its pathway is protein modification; protein glycosylation. Its function is as follows. Subunit of the oligosaccharyl transferase (OST) complex that catalyzes the initial transfer of a defined glycan (Glc(3)Man(9)GlcNAc(2) in eukaryotes) from the lipid carrier dolichol-pyrophosphate to an asparagine residue within an Asn-X-Ser/Thr consensus motif in nascent polypeptide chains, the first step in protein N-glycosylation. N-glycosylation occurs cotranslationally and the complex associates with the Sec61 complex at the channel-forming translocon complex that mediates protein translocation across the endoplasmic reticulum (ER). All subunits are required for a maximal enzyme activity. This chain is Dolichyl-diphosphooligosaccharide--protein glycosyltransferase subunit 1, found in Homo sapiens (Human).